A 435-amino-acid polypeptide reads, in one-letter code: ATP-dependent protease ATPase subunit HslU (435 aa).

ATP is bound by residues V18, 60–65 (GVGKTE), D248, E313, and R385.

This sequence belongs to the ClpX chaperone family. HslU subfamily. As to quaternary structure, a double ring-shaped homohexamer of HslV is capped on each side by a ring-shaped HslU homohexamer. The assembly of the HslU/HslV complex is dependent on binding of ATP.

The protein resides in the cytoplasm. In terms of biological role, ATPase subunit of a proteasome-like degradation complex; this subunit has chaperone activity. The binding of ATP and its subsequent hydrolysis by HslU are essential for unfolding of protein substrates subsequently hydrolyzed by HslV. HslU recognizes the N-terminal part of its protein substrates and unfolds these before they are guided to HslV for hydrolysis. The sequence is that of ATP-dependent protease ATPase subunit HslU from Parvibaculum lavamentivorans (strain DS-1 / DSM 13023 / NCIMB 13966).